The primary structure comprises 133 residues: DNA-binding protein inhibitor ID-2-A (133 aa).

Residues 23-75 (ARSKTPVDDPMSLLYNMNDCYSKLKELVPSIPQNKKVSKMEILQHVIDYILDL) enclose the bHLH domain. The short motif at 106–115 (LNTDISILSL) is the Nuclear export signal element.

In terms of assembly, heterodimer with other HLH proteins. As to expression, in the embryo, expressed in a range of tissues, with primary expression in the developing pronephros; expressed in the pronephric anlage, and by the swimming tadpole stages expressed robustly in the pronephric tubules and weakly in the pronephric duct. Expressed in the secondary heart field. In the developing nervous system, expressed in the neural crest and in the neural folds during neurula stages, and at stage 20 in the neural tube, ventral mesoderm and mid-hindbrain boundary. By early tailbud stages, expressed in the neural tube, somites and branchial arches. In tadpoles (stage 37/38), expressed in the heart, eye, otic vesicle, somites and branchial arches. Also expressed in migrating muscle cells. Expressed at a low level in limbs, with expression decreasing as limbs develop, but expressed at a high level in blastemas (regenerated limbs), where expression is localized primarily to the blastemal epidermis. Widely expressed in adults with highest expression in the spleen, skin, intestine and brain, and at a much lower level in testis and heart.

Its subcellular location is the cytoplasm. The protein resides in the nucleus. Its function is as follows. Transcriptional regulator (lacking a basic DNA binding domain) which negatively regulates the basic helix-loop-helix (bHLH) transcription factors by forming heterodimers and inhibiting their DNA binding and transcriptional activity. Inhibits the activity of both neurogenic (neurod1/neuroD) and myogenic (myod1/myoD) bHLH factors. May play a role in the regulation of the circadian clock. This chain is DNA-binding protein inhibitor ID-2-A (id2-a), found in Xenopus laevis (African clawed frog).